A 154-amino-acid polypeptide reads, in one-letter code: Calmodulin-like protein 4 (154 aa).

EF-hand domains lie at 7-42, 43-78, 80-115, and 116-151; these read EQMVAFQEAFLLFDKNGDGCITLEELAAVTRSLGLE, PTDQELNDMMREVDTDGNGIIDFQEFLSLIARKMKD, DGDEELKEAFEVLDKDQNGFISPTELRTVMTNLGEK, and MTDEEVEQMIREADTDGDGQVNYDEFVIMMKNAERK. 13 residues coordinate Ca(2+): Asp-20, Asn-22, Asp-24, Cys-26, Glu-31, Asp-56, Asp-58, Asn-60, Glu-67, Asp-93, Asp-95, Asn-97, and Glu-104. Lys-115 bears the N6,N6,N6-trimethyllysine mark. Ca(2+) contacts are provided by Asp-129, Asp-131, Asp-133, Gln-135, and Glu-140.

The protein belongs to the calmodulin family.

In terms of biological role, potential calcium sensor. The chain is Calmodulin-like protein 4 (CML4) from Oryza sativa subsp. japonica (Rice).